The chain runs to 583 residues: Proline--tRNA ligase (583 aa).

The protein belongs to the class-II aminoacyl-tRNA synthetase family. ProS type 1 subfamily. Homodimer.

The protein localises to the cytoplasm. It catalyses the reaction tRNA(Pro) + L-proline + ATP = L-prolyl-tRNA(Pro) + AMP + diphosphate. Catalyzes the attachment of proline to tRNA(Pro) in a two-step reaction: proline is first activated by ATP to form Pro-AMP and then transferred to the acceptor end of tRNA(Pro). As ProRS can inadvertently accommodate and process non-cognate amino acids such as alanine and cysteine, to avoid such errors it has two additional distinct editing activities against alanine. One activity is designated as 'pretransfer' editing and involves the tRNA(Pro)-independent hydrolysis of activated Ala-AMP. The other activity is designated 'posttransfer' editing and involves deacylation of mischarged Ala-tRNA(Pro). The misacylated Cys-tRNA(Pro) is not edited by ProRS. This chain is Proline--tRNA ligase, found in Acidothermus cellulolyticus (strain ATCC 43068 / DSM 8971 / 11B).